The sequence spans 135 residues: MADFKIVVSDPKTKTYQFDITGAEANQFIGRSIGQTVDGATVGLDGYTLTITGGTDNSGFVMSPTLPGPRRQKVLIANGVGYSAVAKGVRRRKFLRGSEVAPDITQINTKVTGYSDKAIEEILGGGSEEVEAPAE.

Belongs to the eukaryotic ribosomal protein eS6 family.

The sequence is that of Small ribosomal subunit protein eS6 from Methanococcoides burtonii (strain DSM 6242 / NBRC 107633 / OCM 468 / ACE-M).